We begin with the raw amino-acid sequence, 249 residues long: 2,3-bisphosphoglycerate-dependent phosphoglycerate mutase (249 aa).

Substrate contacts are provided by residues 8 to 15, 21 to 22, arginine 60, 87 to 90, lysine 98, 114 to 115, and 183 to 184; these read RHGESTWN, TG, ERHY, RR, and GN. Histidine 9 functions as the Tele-phosphohistidine intermediate in the catalytic mechanism. The active-site Proton donor/acceptor is glutamate 87.

Belongs to the phosphoglycerate mutase family. BPG-dependent PGAM subfamily. In terms of assembly, homodimer.

The enzyme catalyses (2R)-2-phosphoglycerate = (2R)-3-phosphoglycerate. It functions in the pathway carbohydrate degradation; glycolysis; pyruvate from D-glyceraldehyde 3-phosphate: step 3/5. In terms of biological role, catalyzes the interconversion of 2-phosphoglycerate and 3-phosphoglycerate. The protein is 2,3-bisphosphoglycerate-dependent phosphoglycerate mutase of Aromatoleum aromaticum (strain DSM 19018 / LMG 30748 / EbN1) (Azoarcus sp. (strain EbN1)).